The following is a 104-amino-acid chain: Small ribosomal subunit protein uS10 (104 aa).

It belongs to the universal ribosomal protein uS10 family. As to quaternary structure, part of the 30S ribosomal subunit.

Its function is as follows. Involved in the binding of tRNA to the ribosomes. The chain is Small ribosomal subunit protein uS10 from Dichelobacter nodosus (strain VCS1703A).